The chain runs to 170 residues: TFIIB-type zinc finger protein (170 aa).

The TFIIB-type zinc finger occupies methionine 1 to aspartate 30. The Zn(2+) site is built by cysteine 3, cysteine 6, cysteine 22, and cysteine 25.

It belongs to the TFIIB family. Zn(2+) is required as a cofactor.

The sequence is that of TFIIB-type zinc finger protein from Saccharolobus shibatae (strain ATCC 51178 / DSM 5389 / JCM 8931 / NBRC 15437 / B12) (Sulfolobus shibatae).